A 610-amino-acid chain; its full sequence is Elongation factor 4 (610 aa).

The region spanning 11–193 (KYIRNFSIVA…QIVTKIPAPA (183 aa)) is the tr-type G domain. GTP-binding positions include 23–28 (DHGKST) and 140–143 (NKID).

This sequence belongs to the TRAFAC class translation factor GTPase superfamily. Classic translation factor GTPase family. LepA subfamily.

The protein localises to the cell membrane. The catalysed reaction is GTP + H2O = GDP + phosphate + H(+). Required for accurate and efficient protein synthesis under certain stress conditions. May act as a fidelity factor of the translation reaction, by catalyzing a one-codon backward translocation of tRNAs on improperly translocated ribosomes. Back-translocation proceeds from a post-translocation (POST) complex to a pre-translocation (PRE) complex, thus giving elongation factor G a second chance to translocate the tRNAs correctly. Binds to ribosomes in a GTP-dependent manner. The chain is Elongation factor 4 from Levilactobacillus brevis (strain ATCC 367 / BCRC 12310 / CIP 105137 / JCM 1170 / LMG 11437 / NCIMB 947 / NCTC 947) (Lactobacillus brevis).